Reading from the N-terminus, the 751-residue chain is Meiotic sister-chromatid recombination protein 3 (751 aa).

Disordered regions lie at residues 54–88 (GVGMGRTQSLTGYGRTRSLGAARPSYLGAPPRTYS), 216–290 (LRAP…KKQM), 314–410 (PALE…EARF), 431–504 (TQEN…RPSF), and 558–610 (KDVP…SPPQ). Low complexity predominate over residues 216-228 (LRAPPRVQQQRQL). 2 stretches are compositionally biased toward basic and acidic residues: residues 345–356 (ERSRPAKREVRK) and 384–393 (ERVHNKEKTL). Residues 431-496 (TQENSTRDNG…GCETGNTTPK (66 aa)) are compositionally biased toward polar residues. The segment covering 596-609 (RSSISSSPRRSSPP) has biased composition (low complexity).

It localises to the cell membrane. Functionally, may be involved in the control of meiotic sister-chromatid recombination. The protein is Meiotic sister-chromatid recombination protein 3 (MSC3) of Eremothecium gossypii (strain ATCC 10895 / CBS 109.51 / FGSC 9923 / NRRL Y-1056) (Yeast).